Here is a 258-residue protein sequence, read N- to C-terminus: Indole-3-glycerol phosphate synthase (258 aa).

The protein belongs to the TrpC family.

The enzyme catalyses 1-(2-carboxyphenylamino)-1-deoxy-D-ribulose 5-phosphate + H(+) = (1S,2R)-1-C-(indol-3-yl)glycerol 3-phosphate + CO2 + H2O. It participates in amino-acid biosynthesis; L-tryptophan biosynthesis; L-tryptophan from chorismate: step 4/5. This is Indole-3-glycerol phosphate synthase from Campylobacter jejuni subsp. doylei (strain ATCC BAA-1458 / RM4099 / 269.97).